The sequence spans 69 residues: Conotoxin LvVID (69 aa).

The signal sequence occupies residues 1–17 (VLIIAVLFLTACQLTTA). A propeptide spanning residues 18–40 (ETYPRGQQRHHALRSTDKNSKLT) is cleaved from the precursor. 3 disulfides stabilise this stretch: cysteine 43–cysteine 57, cysteine 50–cysteine 61, and cysteine 56–cysteine 68.

It belongs to the conotoxin O1 superfamily. Expressed by the venom duct.

Its subcellular location is the secreted. The chain is Conotoxin LvVID from Conus lividus (Livid cone).